The chain runs to 308 residues: Acetaldehyde dehydrogenase 2 (308 aa).

Residue 12–15 participates in NAD(+) binding; sequence SGNI. The active-site Acyl-thioester intermediate is Cys127. Residues 162-170 and Asn281 contribute to the NAD(+) site; that span reads SAGPGTRAN.

It belongs to the acetaldehyde dehydrogenase family.

It catalyses the reaction acetaldehyde + NAD(+) + CoA = acetyl-CoA + NADH + H(+). The sequence is that of Acetaldehyde dehydrogenase 2 from Mycobacterium marinum (strain ATCC BAA-535 / M).